Consider the following 448-residue polypeptide: Metacaspase-1 (448 aa).

Residues 1-129 (MFPGQGRHTY…GHYSRPPTDS (129 aa)) are disordered. Low complexity predominate over residues 10 to 44 (YGGQQSNYSNQQQGYDQGYNQGYGQAYGQEYNQGY). Over residues 61-70 (SGPPPGPPPG) the composition is skewed to pro residues. Residues 99–114 (YGNNQTRGSGNEQNYG) show a composition bias toward polar residues. Residues His231 and Cys292 contribute to the active site.

It belongs to the peptidase C14B family.

Functionally, involved in cell death (apoptosis). This chain is Metacaspase-1 (MCA1), found in Candida albicans (strain SC5314 / ATCC MYA-2876) (Yeast).